The following is a 68-amino-acid chain: Large ribosomal subunit protein uL29 (68 aa).

It belongs to the universal ribosomal protein uL29 family.

This is Large ribosomal subunit protein uL29 from Streptococcus pneumoniae (strain JJA).